A 28-amino-acid chain; its full sequence is Ribosome-inactivating protein pleuturegin (28 aa).

It belongs to the ribosome-inactivating protein family.

The enzyme catalyses Endohydrolysis of the N-glycosidic bond at one specific adenosine on the 28S rRNA.. Inhibits protein synthesis in animal cells. Does not possess ribonuclease activity. The polypeptide is Ribosome-inactivating protein pleuturegin (Pleurotus tuber-regium (King tuber oyster mushroom)).